The following is a 1368-amino-acid chain: DNA-directed RNA polymerase subunit beta (1368 aa).

The protein belongs to the RNA polymerase beta chain family. The RNAP catalytic core consists of 2 alpha, 1 beta, 1 beta' and 1 omega subunit. When a sigma factor is associated with the core the holoenzyme is formed, which can initiate transcription.

The catalysed reaction is RNA(n) + a ribonucleoside 5'-triphosphate = RNA(n+1) + diphosphate. In terms of biological role, DNA-dependent RNA polymerase catalyzes the transcription of DNA into RNA using the four ribonucleoside triphosphates as substrates. The protein is DNA-directed RNA polymerase subunit beta of Burkholderia lata (strain ATCC 17760 / DSM 23089 / LMG 22485 / NCIMB 9086 / R18194 / 383).